The sequence spans 475 residues: uncharacterized protein (475 aa).

The helical transmembrane segment at 19–39 (LVSAILILSILIWLIITIFFA) threads the bilayer.

The protein resides in the membrane. This is an uncharacterized protein from Mycoplasma pneumoniae (strain ATCC 29342 / M129 / Subtype 1) (Mycoplasmoides pneumoniae).